The sequence spans 310 residues: tRNA uridine(34) hydroxylase (310 aa).

Residues 127–225 (KNQNTIVIDT…YLDDIPKEKN (99 aa)) form the Rhodanese domain. Cysteine 185 functions as the Cysteine persulfide intermediate in the catalytic mechanism.

Belongs to the TrhO family.

The enzyme catalyses uridine(34) in tRNA + AH2 + O2 = 5-hydroxyuridine(34) in tRNA + A + H2O. In terms of biological role, catalyzes oxygen-dependent 5-hydroxyuridine (ho5U) modification at position 34 in tRNAs. The chain is tRNA uridine(34) hydroxylase from Prochlorococcus marinus (strain MIT 9312).